The chain runs to 767 residues: DNA topoisomerase 1 (767 aa).

Residues 1–23 (MSGDHLHNDSQIEADFRLNDSHK) are compositionally biased toward basic and acidic residues. The tract at residues 1-201 (MSGDHLHNDS…NKKKKPKKEE (201 aa)) is disordered. Serine 2 bears the N-acetylserine mark. Phosphoserine occurs at positions 2 and 10. Residues 24-39 (HKDKHKDREHRHKEHK) are compositionally biased toward basic residues. Residues 40 to 110 (KDKDKDREKS…DAKIKKEKEN (71 aa)) are compositionally biased toward basic and acidic residues. Phosphoserine is present on serine 59. Residue lysine 103 forms a Glycyl lysine isopeptide (Lys-Gly) (interchain with G-Cter in SUMO2) linkage. A Glycyl lysine isopeptide (Lys-Gly) (interchain with G-Cter in SUMO); alternate cross-link involves residue lysine 105. Lysine 105 is covalently cross-linked (Glycyl lysine isopeptide (Lys-Gly) (interchain with G-Cter in SUMO2); alternate). Serine 114 carries the phosphoserine modification. Lysine 119 participates in a covalent cross-link: Glycyl lysine isopeptide (Lys-Gly) (interchain with G-Cter in SUMO); alternate. Residue lysine 119 forms a Glycyl lysine isopeptide (Lys-Gly) (interchain with G-Cter in SUMO2); alternate linkage. Lysine 119 is covalently cross-linked (Glycyl lysine isopeptide (Lys-Gly) (interchain with G-Cter in SUMO1); alternate). Over residues 131 to 168 (PKEDIKPLKRLRDEDDADYKPKKIKTEDIKKEKKRKSE) the composition is skewed to basic and acidic residues. Residues lysine 136 and lysine 150 each participate in a glycyl lysine isopeptide (Lys-Gly) (interchain with G-Cter in SUMO2) cross-link. Lysine 155 is covalently cross-linked (Glycyl lysine isopeptide (Lys-Gly) (interchain with G-Cter in SUMO); alternate). Residue lysine 155 forms a Glycyl lysine isopeptide (Lys-Gly) (interchain with G-Cter in SUMO2); alternate linkage. Residues lysine 160 and lysine 166 each participate in a glycyl lysine isopeptide (Lys-Gly) (interchain with G-Cter in SUMO2) cross-link. Lysine 174 participates in a covalent cross-link: Glycyl lysine isopeptide (Lys-Gly) (interchain with G-Cter in SUMO2); alternate. Position 174 is an N6-acetyllysine; alternate (lysine 174). Over residues 181–201 (KDKDKKVAEPDNKKKKPKKEE) the composition is skewed to basic and acidic residues. Lysine 206 participates in a covalent cross-link: Glycyl lysine isopeptide (Lys-Gly) (interchain with G-Cter in SUMO2). N6-acetyllysine is present on lysine 282. Lysine 338 is covalently cross-linked (Glycyl lysine isopeptide (Lys-Gly) (interchain with G-Cter in SUMO2)). Interaction with DNA regions lie at residues 427 to 428 (KY) and 490 to 495 (RAGNEK). Residues 434-767 (SSRIKGEKDW…IDMTDEDYEF (334 aa)) enclose the Topo IB-type catalytic domain. At serine 508 the chain carries Phosphoserine; by CK2. A Glycyl lysine isopeptide (Lys-Gly) (interchain with G-Cter in SUMO2) cross-link involves residue lysine 551. The interval 587 to 589 (TAK) is interaction with DNA. Residues lysine 644, lysine 702, and lysine 714 each participate in a glycyl lysine isopeptide (Lys-Gly) (interchain with G-Cter in SUMO2) cross-link. Residue tyrosine 725 is the O-(3'-phospho-DNA)-tyrosine intermediate of the active site.

This sequence belongs to the type IB topoisomerase family. Monomer. Interacts with ERCC6. Interacts with TPRN; TPRN interacts with a number of DNA damage response proteins, is recruited to sites of DNA damage and may play a role in DNA damage repair. In terms of processing, sumoylated. Lys-119 is the main site of sumoylation. Sumoylation plays a role in partitioning TOP1 between nucleoli and nucleoplasm. Levels are dramatically increased on camptothecin (CPT) treatment. Post-translationally, phosphorylation at Ser-508 by CK2 increases binding to supercoiled DNA and sensitivity to camptothecin.

The protein localises to the nucleus. The protein resides in the nucleolus. Its subcellular location is the nucleoplasm. It carries out the reaction ATP-independent breakage of single-stranded DNA, followed by passage and rejoining.. In terms of biological role, releases the supercoiling and torsional tension of DNA introduced during the DNA replication and transcription by transiently cleaving and rejoining one strand of the DNA duplex. Introduces a single-strand break via transesterification at a target site in duplex DNA. The scissile phosphodiester is attacked by the catalytic tyrosine of the enzyme, resulting in the formation of a DNA-(3'-phosphotyrosyl)-enzyme intermediate and the expulsion of a 5'-OH DNA strand. The free DNA strand then rotates around the intact phosphodiester bond on the opposing strand, thus removing DNA supercoils. Finally, in the religation step, the DNA 5'-OH attacks the covalent intermediate to expel the active-site tyrosine and restore the DNA phosphodiester backbone. Regulates the alternative splicing of tissue factor (F3) pre-mRNA in endothelial cells. Involved in the circadian transcription of the core circadian clock component BMAL1 by altering the chromatin structure around the ROR response elements (ROREs) on the BMAL1 promoter. The protein is DNA topoisomerase 1 (Top1) of Mus musculus (Mouse).